A 159-amino-acid polypeptide reads, in one-letter code: Mesogenin-1 (159 aa).

Residues 79-101 (PGQARLPKGTKVRMSAQRRRKAS) form a disordered region. The span at 86–100 (KGTKVRMSAQRRRKA) shows a compositional bias: basic residues. The bHLH domain occupies 95–149 (QRRRKASEREKLRMRTLADALHTLRNYLPPAYSQRGQPLTKIQTLKCTIKYISEL).

It localises to the nucleus. Involved in specifying the paraxial, but not dorsal, mesoderm. May regulate the expression of T-box transcription factors required for mesoderm formation and differentiation. This chain is Mesogenin-1 (MSGN1), found in Gallus gallus (Chicken).